A 105-amino-acid chain; its full sequence is Ig lambda chain C region (105 aa).

Positions 2–100 (PKAAPTVNLF…EGTIVEKTVT (99 aa)) constitute an Ig-like domain. A disulfide bond links C27 and C86.

The polypeptide is Ig lambda chain C region (Sus scrofa (Pig)).